Consider the following 216-residue polypeptide: Adenylate kinase (216 aa).

An ATP-binding site is contributed by 11-16; the sequence is GSGKGT. The interval 31–60 is NMP; that stretch reads ATGDLFRKAIERGDELGDTVKSYMERGELV. AMP-binding positions include Thr32, Arg37, 58-60, 86-89, and Gln93; these read ELV and GFPR. Residues 127 to 163 are LID; the sequence is GRWVCRSCQSPYQCGCAEVAEGKCSRCQGELYQRPDD. Arg128 contributes to the ATP binding site. Zn(2+)-binding residues include Cys131, Cys134, Cys150, and Cys153. AMP-binding residues include Arg160 and Arg171. Position 199 (Ala199) interacts with ATP.

It belongs to the adenylate kinase family. Monomer.

The protein localises to the cytoplasm. It catalyses the reaction AMP + ATP = 2 ADP. It functions in the pathway purine metabolism; AMP biosynthesis via salvage pathway; AMP from ADP: step 1/1. Catalyzes the reversible transfer of the terminal phosphate group between ATP and AMP. Plays an important role in cellular energy homeostasis and in adenine nucleotide metabolism. This chain is Adenylate kinase, found in Dehalococcoides mccartyi (strain ATCC BAA-2266 / KCTC 15142 / 195) (Dehalococcoides ethenogenes (strain 195)).